The following is a 380-amino-acid chain: L-prolyl-[peptidyl-carrier protein] dehydrogenase (380 aa).

The Proton acceptor role is filled by glutamate 243. FAD-binding residues include arginine 269 and glutamine 280.

The protein belongs to the acyl-CoA dehydrogenase family. Requires FAD as cofactor.

The catalysed reaction is L-prolyl-[peptidyl-carrier protein] + 2 oxidized [electron-transfer flavoprotein] + H(+) = (1H-pyrrole-2-carbonyl)-[peptidyl-carrier protein] + 2 reduced [electron-transfer flavoprotein]. In terms of biological role, involved in the biosynthesis of pyoluteorin. Catalyzes the desaturation of the L-prolyl-[PltL] to yield 1H-pyrrole-2-carbonyl-[PltL]. The polypeptide is L-prolyl-[peptidyl-carrier protein] dehydrogenase (Pseudomonas fluorescens (strain ATCC BAA-477 / NRRL B-23932 / Pf-5)).